A 188-amino-acid polypeptide reads, in one-letter code: FMN-dependent NADPH-azoreductase (188 aa).

The protein belongs to the azoreductase type 2 family. In terms of assembly, homotetramer. Requires FMN as cofactor.

Its function is as follows. Catalyzes the reductive cleavage of azo bond in aromatic azo compounds to the corresponding amines. Requires NADPH, but not NADH, as an electron donor for its activity. The chain is FMN-dependent NADPH-azoreductase (azo1) from Staphylococcus saprophyticus subsp. saprophyticus (strain ATCC 15305 / DSM 20229 / NCIMB 8711 / NCTC 7292 / S-41).